Reading from the N-terminus, the 177-residue chain is PBAN-type neuropeptides (177 aa).

A signal peptide spans Met1–Gly23. A propeptide spanning residues Glu24–Lys54 is cleaved from the precursor. The disordered stretch occupies residues Glu28–Arg73. Positions Ser31 to Gly45 are enriched in polar residues. The segment covering Cys47–Thr59 has biased composition (low complexity). A Leucine amide modification is found at Leu74. Residues His78–Glu113 constitute a propeptide that is removed on maturation. A leucine amide mark is found at Leu124, Leu154, and Leu166. A propeptide spanning residues Gln169 to Ile177 is cleaved from the precursor.

It belongs to the pyrokinin family. In terms of tissue distribution, pyrokinins (PK) 1 to 4 are expressed in the retrocerebral complex. PK 1 is expressed in central brain, anntennal lobes and abominal ganglia. PK 2 is expressed in optical lobes and in gnathal, thoracic and abdominal ganglia. PK 3 is expressed in optical lobes and in thoracic and abdominal ganglia (at protein level).

Its subcellular location is the secreted. In terms of biological role, pyrokinins mediate visceral muscle contractile activity (myotropic activity). The polypeptide is PBAN-type neuropeptides (Camponotus floridanus (Florida carpenter ant)).